Here is a 611-residue protein sequence, read N- to C-terminus: Mitochondrial import receptor subunit TOM70 (611 aa).

Alanine 2 carries the post-translational modification N-acetylalanine. Over 2 to 41 (AASKPIEAAMAAAAAPGSGNGVGGGGGTAGPGSGAGTLPR) the chain is Mitochondrial intermembrane. The chain crosses the membrane as a helical span at residues 42–62 (WHVALAIGAPLLLGAGAMYLW). Residues 63 to 611 (SRRRRRREAG…KKYGLKPPTL (549 aa)) lie on the Cytoplasmic side of the membrane. The segment at 69-110 (REAGGRGDASGLKRNSERKTPEGRASPALGSGHHDGSGDSLE) is disordered. Arginine 74 bears the Omega-N-methylarginine mark. Phosphoserine occurs at positions 94, 99, 105, 108, and 113. TPR repeat units lie at residues 117 to 150 (AQAA…CPTE) and 156 to 189 (STFY…NPKY). Lysine 188 bears the N6-acetyllysine mark. A Glycyl lysine isopeptide (Lys-Gly) (interchain with G-Cter in SUMO2) cross-link involves residue lysine 278. TPR repeat units follow at residues 297–330 (ENSG…QGKY), 332–365 (AEAL…KEAN), 370–403 (ANAL…DPMN), 404–437 (SDVY…RPKF), 445–478 (CFAL…FPRC), 479–512 (AEGY…EPDN), 514–547 (TTYV…DNKC), and 548–581 (DFAY…AKSE).

Belongs to the Tom70 family. Forms part of the preprotein translocase complex of the outer mitochondrial membrane (TOM complex) which consists of at least 7 different proteins (TOMM5, TOMM6, TOMM7, TOMM20, TOMM22, TOMM40 and TOMM70). Interacts with CAPN8. Interacts with TRADD, TRAF6 and STING. Interacts with MAVS. Interacts with HSPA8 and HSP90AA1; both interactions are required for preprotein mitochondrial import. The interaction with HSP90AA1 is direct and mediates the association of TOMM70 with IRF3 and TBK1. Upon mitochondrial depolarization, interacts with PINK1; the interaction is required for PINK1-TOM-TIM23 supercomplex formation which is critical for PINK1 stabilization at the outer mitochondrial membrane, kinase activation and downstream mitophagy. As to expression, expressed in the base region of the oxyntic and pyloric mucosae.

It is found in the mitochondrion outer membrane. Acts as a receptor of the preprotein translocase complex of the outer mitochondrial membrane (TOM complex). Recognizes and mediates the translocation of mitochondrial preproteins from the cytosol into the mitochondria in a chaperone dependent manner. Mediates TBK1 and IRF3 activation induced by MAVS in response to virus infection and promotes host antiviral responses during virus infection. The sequence is that of Mitochondrial import receptor subunit TOM70 from Mus musculus (Mouse).